The following is a 215-amino-acid chain: Large ribosomal subunit protein bL25 (215 aa).

The interval 160–215 (GDLPLPEGSELVTEPEETVMSVVAPETEEEPDTEEDEEGEEDVEEESEEEEEESEE) is disordered. The span at 185–215 (ETEEEPDTEEDEEGEEDVEEESEEEEEESEE) shows a compositional bias: acidic residues.

It belongs to the bacterial ribosomal protein bL25 family. CTC subfamily. In terms of assembly, part of the 50S ribosomal subunit; part of the 5S rRNA/L5/L18/L25 subcomplex. Contacts the 5S rRNA. Binds to the 5S rRNA independently of L5 and L18.

This is one of the proteins that binds to the 5S RNA in the ribosome where it forms part of the central protuberance. In Natranaerobius thermophilus (strain ATCC BAA-1301 / DSM 18059 / JW/NM-WN-LF), this protein is Large ribosomal subunit protein bL25.